A 67-amino-acid chain; its full sequence is Alpha-toxin Bu1 (67 aa).

The LCN-type CS-alpha/beta domain occupies arginine 3–arginine 65. 4 disulfide bridges follow: cysteine 13–cysteine 64, cysteine 17–cysteine 37, cysteine 23–cysteine 47, and cysteine 27–cysteine 49. Arginine amide is present on arginine 65.

It belongs to the long (4 C-C) scorpion toxin superfamily. Sodium channel inhibitor family. Alpha subfamily. As to expression, expressed by the venom gland.

The protein localises to the secreted. In terms of biological role, alpha toxins bind voltage-independently at site-3 of sodium channels (Nav) and inhibit the inactivation of the activated channels, thereby blocking neuronal transmission. Since the experiments have been done on F11 cells (immortalized cell line derived from rat DRG neurons mainly expressing Nav1.3/SCN3A, but also Nav1.7/SCN9A and Nav1.2/SCN2A), it is supposed to act on these channels. The slow of inactivation process is partially reversible. Is lethal to mice. This chain is Alpha-toxin Bu1, found in Buthacus macrocentrus (Turkish scorpion).